The chain runs to 142 residues: Large ribosomal subunit protein bL19 (142 aa).

It belongs to the bacterial ribosomal protein bL19 family.

This protein is located at the 30S-50S ribosomal subunit interface and may play a role in the structure and function of the aminoacyl-tRNA binding site. The chain is Large ribosomal subunit protein bL19 from Rickettsia bellii (strain OSU 85-389).